The sequence spans 337 residues: Serpentine receptor class alpha-17 (337 aa).

6 helical membrane passes run 28-48 (LNFVFIATVIFLSFYFAGLAI), 110-130 (ELYFYYLTNYFSTYAVFSLTF), 155-175 (IIQLLLSLSTYYVGLYGVPLV), 197-217 (FRTATMVFCIIVTIFIYYLSV), 247-267 (CILIVLQFACIMLSSFGVNYI), and 282-302 (IAPFFPGVTYASLCLPLVIYF).

It belongs to the nematode receptor-like protein sra family.

It localises to the membrane. The protein is Serpentine receptor class alpha-17 (sra-17) of Caenorhabditis elegans.